We begin with the raw amino-acid sequence, 251 residues long: Probable transcriptional regulatory protein cauri_1421 (251 aa).

Residues 1 to 21 (MAGHSKWATTKHKKAANDAKR) form a disordered region.

Belongs to the TACO1 family.

The protein resides in the cytoplasm. This chain is Probable transcriptional regulatory protein cauri_1421, found in Corynebacterium aurimucosum (strain ATCC 700975 / DSM 44827 / CIP 107346 / CN-1) (Corynebacterium nigricans).